A 141-amino-acid polypeptide reads, in one-letter code: MGIKYLLRDKMVVRSWRHIKERYCLIGVRCKNCGTVYFPSREICPKCRRKTEFEEIKLSGKGKVYTYSVVHVAPKDFEKQAPYVIAIIELEEGARITGQIVDCKPEDVYIGMQVEAVFRRIKEDGDDGVITYGYKFKPIEN.

Cysteine 30, cysteine 33, cysteine 44, and cysteine 47 together coordinate Zn(2+).

Belongs to the scaffold protein DUF35 family. As to quaternary structure, interacts with acetoacetyl-CoA thiolase and HMG-CoA synthase (HMGCS) that catalyzes the first and second step in the mevalonate pathway, respectively.

Functions as a scaffold to connect the acetoacetyl-CoA thiolase and HMG-CoA synthase (HMGCS) dimers in the channeling thiolase/HMGCS complex, which allows for efficient coupling of the endergonic thiolase reaction with the exergonic HMGCS reaction. This Methanocaldococcus jannaschii (strain ATCC 43067 / DSM 2661 / JAL-1 / JCM 10045 / NBRC 100440) (Methanococcus jannaschii) protein is DUF35 domain-containing scaffold protein.